The sequence spans 220 residues: Ribosomal RNA small subunit methyltransferase G (220 aa).

S-adenosyl-L-methionine contacts are provided by glycine 78, leucine 83, and arginine 144.

The protein belongs to the methyltransferase superfamily. RNA methyltransferase RsmG family.

The protein resides in the cytoplasm. The catalysed reaction is guanosine(527) in 16S rRNA + S-adenosyl-L-methionine = N(7)-methylguanosine(527) in 16S rRNA + S-adenosyl-L-homocysteine. Specifically methylates the N7 position of guanine in position 527 of 16S rRNA. In Alkalilimnicola ehrlichii (strain ATCC BAA-1101 / DSM 17681 / MLHE-1), this protein is Ribosomal RNA small subunit methyltransferase G.